The sequence spans 356 residues: Tyrosine recombinase XerS (356 aa).

Residues 16–121 form the Core-binding (CB) domain; it reads IMPWYVLDYY…ALSSLYKYLT (106 aa). The region spanning 169–354 is the Tyr recombinase domain; that stretch reads AFLDYVDKEY…VNDEQKNALD (186 aa). Active-site residues include Arg-210, Lys-234, His-306, Arg-309, and His-332. The O-(3'-phospho-DNA)-tyrosine intermediate role is filled by Tyr-341.

It belongs to the 'phage' integrase family. XerS subfamily.

The protein localises to the cytoplasm. Its activity is regulated as follows. FtsK is required for recombination. In terms of biological role, site-specific tyrosine recombinase, which acts by catalyzing the cutting and rejoining of the recombining DNA molecules. Essential to convert dimers of the bacterial chromosome into monomers to permit their segregation at cell division. This Streptococcus equi subsp. zooepidemicus (strain H70) protein is Tyrosine recombinase XerS.